The sequence spans 813 residues: Lon protease (813 aa).

The Lon N-terminal domain maps to 30 to 225; the sequence is LPILPVRNIV…WLLQLMDKDI (196 aa). 376 to 383 contacts ATP; sequence GPPGVGKT. A Lon proteolytic domain is found at 612 to 793; the sequence is DDLAGIVTGL…DEVLAIALLK (182 aa). Active-site residues include Ser-699 and Lys-742.

Belongs to the peptidase S16 family. In terms of assembly, homohexamer. Organized in a ring with a central cavity.

It is found in the cytoplasm. The enzyme catalyses Hydrolysis of proteins in presence of ATP.. Its function is as follows. ATP-dependent serine protease that mediates the selective degradation of mutant and abnormal proteins as well as certain short-lived regulatory proteins. Required for cellular homeostasis and for survival from DNA damage and developmental changes induced by stress. Degrades polypeptides processively to yield small peptide fragments that are 5 to 10 amino acids long. Binds to DNA in a double-stranded, site-specific manner. This is Lon protease from Cytophaga hutchinsonii (strain ATCC 33406 / DSM 1761 / CIP 103989 / NBRC 15051 / NCIMB 9469 / D465).